Reading from the N-terminus, the 134-residue chain is UPF0412 protein YaaI (134 aa).

Positions 1 to 23 (MKSVFTLSASLAISLLLCCTAQA) are cleaved as a signal peptide.

Belongs to the UPF0412 family.

The polypeptide is UPF0412 protein YaaI (Escherichia coli O7:K1 (strain IAI39 / ExPEC)).